A 61-amino-acid chain; its full sequence is Photosystem II reaction center X protein (61 aa).

Residues 26–46 (IGSFIAAALLIVVPATAFLIF) form a helical membrane-spanning segment.

It belongs to the PsbX family. Type 2 subfamily. PSII consists of a core antenna complex that captures photons, and an electron transfer chain that converts photonic excitation into a charge separation. PSII forms dimeric complexes.

The protein localises to the cellular thylakoid membrane. Its function is as follows. Involved in the binding and/or turnover of quinones at the Q(B) site of Photosystem II. In Prochlorococcus marinus (strain AS9601), this protein is Photosystem II reaction center X protein.